A 992-amino-acid chain; its full sequence is UPF0182 protein BCG_3215c (992 aa).

7 helical membrane-spanning segments follow: residues 18-38 (ILIM…RLID), 63-83 (IVVC…GLAL), 113-133 (LVGI…AQSY), 175-195 (LVSV…FGGI), 210-230 (VQLV…YWLD), 259-279 (KLIL…AIAL), and 287-307 (IGLV…PLIV). The disordered stretch occupies residues 906-938 (PTEAAVPPSPAANPPPPASGPQPPPVTAAPPVP). The span at 912–938 (PPSPAANPPPPASGPQPPPVTAAPPVP) shows a compositional bias: pro residues.

This sequence belongs to the UPF0182 family.

The protein localises to the cell membrane. The chain is UPF0182 protein BCG_3215c from Mycobacterium bovis (strain BCG / Pasteur 1173P2).